A 253-amino-acid chain; its full sequence is 3-dehydroquinate dehydratase (253 aa).

Residues 46-48 and Arg82 each bind 3-dehydroquinate; that span reads EWR. His143 acts as the Proton donor/acceptor in catalysis. The active-site Schiff-base intermediate with substrate is the Lys170. Positions 213, 232, and 236 each coordinate 3-dehydroquinate.

The protein belongs to the type-I 3-dehydroquinase family. Homodimer.

The catalysed reaction is 3-dehydroquinate = 3-dehydroshikimate + H2O. The protein operates within metabolic intermediate biosynthesis; chorismate biosynthesis; chorismate from D-erythrose 4-phosphate and phosphoenolpyruvate: step 3/7. In terms of biological role, involved in the third step of the chorismate pathway, which leads to the biosynthesis of aromatic amino acids. Catalyzes the cis-dehydration of 3-dehydroquinate (DHQ) and introduces the first double bond of the aromatic ring to yield 3-dehydroshikimate. The sequence is that of 3-dehydroquinate dehydratase from Syntrophotalea carbinolica (strain DSM 2380 / NBRC 103641 / GraBd1) (Pelobacter carbinolicus).